Here is a 292-residue protein sequence, read N- to C-terminus: Ribosomal protein L11 methyltransferase (292 aa).

T145, G166, D188, and N229 together coordinate S-adenosyl-L-methionine.

The protein belongs to the methyltransferase superfamily. PrmA family.

The protein resides in the cytoplasm. The catalysed reaction is L-lysyl-[protein] + 3 S-adenosyl-L-methionine = N(6),N(6),N(6)-trimethyl-L-lysyl-[protein] + 3 S-adenosyl-L-homocysteine + 3 H(+). Its function is as follows. Methylates ribosomal protein L11. The sequence is that of Ribosomal protein L11 methyltransferase from Pseudoalteromonas atlantica (strain T6c / ATCC BAA-1087).